A 78-amino-acid chain; its full sequence is Beta-defensin 105A (78 aa).

A signal peptide spans 1–27; sequence MALIRKTFYFVFAVFFILVQQPSGCQA. Disulfide bonds link Cys43–Cys74, Cys53–Cys67, and Cys57–Cys73.

Belongs to the beta-defensin family.

The protein resides in the secreted. In terms of biological role, has antimicrobial activity. This is Beta-defensin 105A (DEFB105A) from Macaca fascicularis (Crab-eating macaque).